Consider the following 167-residue polypeptide: Biogenesis of lysosome-related organelles complex 1 subunit 6 (167 aa).

Polar residues predominate over residues 1–11 (MLKSSNINSVL). The disordered stretch occupies residues 1–38 (MLKSSNINSVLNELPNDPARDSTAQSSHNGKPKQDAET). Residues 102–160 (ARLNDMMSDVKRYKDKLTKIKKEMQGVYQRTKELKKRAANVAACKQRDYQRKLERLQHE) adopt a coiled-coil conformation.

It belongs to the BLOC1S6 family. As to quaternary structure, component of the biogenesis of lysosome-related organelles complex-1 (BLOC-1) composed of Blos1, Blos2, Blos3, Blos4, Dysb, Muted, Pldn and Snapin. Interacts with Blos1, Blos4 and Dysb.

Its subcellular location is the synapse. The protein resides in the cytoplasm. It is found in the cytoskeleton. The protein localises to the myofibril. It localises to the sarcomere. Its subcellular location is the z line. Its function is as follows. Component of the biogenesis of lysosome-related organelles complex-1 (BLOC-1) involved in pigment granule biogenesis and membrane trafficking in synapses. In response to high synaptic activity at neuromuscular junctions, plays a key role in promoting efficient synaptic vesicle recycling and re-formation through early endosomes. In Drosophila melanogaster (Fruit fly), this protein is Biogenesis of lysosome-related organelles complex 1 subunit 6.